Here is a 752-residue protein sequence, read N- to C-terminus: Glutamate carboxypeptidase 2 (752 aa).

Residues 1 to 19 (MWNAQQDSDSAEALGRRQR) are Cytoplasmic-facing. Phosphoserine is present on Ser10. Residues 20–44 (WFCAGTLVLAFTGTFIIGFLFGWFI) form a helical; Signal-anchor for type II membrane protein membrane-spanning segment. The Extracellular segment spans residues 45–752 (KPSNDSTSSV…AAAETLREVD (708 aa)). Asn48, Asn78, Asn123, Asn155, and Asn197 each carry an N-linked (GlcNAc...) asparagine glycan. Substrate contacts are provided by Arg212 and Asn259. The Ca(2+) site is built by Thr271 and Tyr274. The segment at 276–589 (ANEYAYRHEF…QVRGAMVFEL (314 aa)) is NAALADase. N-linked (GlcNAc...) asparagine glycosylation is present at Asn338. Positions 379 and 389 each coordinate Zn(2+). Glu426 contacts substrate. Glu426 serves as the catalytic Nucleophile; for NAALADase activity. Zn(2+) is bound at residue Glu427. Ca(2+) is bound by residues Glu435 and Glu438. Asp455 contacts Zn(2+). Asn461 and Asn478 each carry an N-linked (GlcNAc...) asparagine glycan. Residues 519 to 520 (SG), Asn521, 536 to 538 (RAR), Tyr554, and 554 to 555 (YH) each bind substrate. His555 contacts Zn(2+). A glycan (N-linked (GlcNAc...) asparagine) is linked at Asn615. The active-site Charge relay system is Ser630. N-linked (GlcNAc...) asparagine glycosylation occurs at Asn640. Residues Asp668 and His691 each act as charge relay system in the active site. 701 to 702 (KY) provides a ligand contact to substrate.

This sequence belongs to the peptidase M28 family. M28B subfamily. In terms of assembly, homodimer. The cofactor is Zn(2+). In terms of tissue distribution, widely expressed throughout brain regions with highest levels in the hippocampus, dentate gyrus, priform cortex, choroid plexus of ventricles, pineal gland, anterior lobe of the pituitary gland and supraoptic nucleus. High levels also found in the cerebral cortex, substantia nigra, pontine nucleus and the granule cell layer of cerebellum. Highly expressed in astrocytes and non-myelinating Schwann cells. Also expressed in kidney, localizing to the proximal brush border of the renal tube.

The protein resides in the cell membrane. The enzyme catalyses Release of an unsubstituted, C-terminal glutamyl residue, typically from Ac-Asp-Glu or folylpoly-gamma-glutamates.. Its activity is regulated as follows. The NAALADase activity is inhibited by beta-NAAG, quisqualic acid and 2-(phosphonomethyl)glutaric acid (PMG). Its function is as follows. Has both folate hydrolase and N-acetylated-alpha-linked-acidic dipeptidase (NAALADase) activity. Has a preference for tri-alpha-glutamate peptides. In the intestine, required for the uptake of folate. In the brain, modulates excitatory neurotransmission through the hydrolysis of the neuropeptide, N-aceylaspartylglutamate (NAAG), thereby releasing glutamate. Also exhibits a dipeptidyl-peptidase IV type activity. In vitro, cleaves Gly-Pro-AMC. This chain is Glutamate carboxypeptidase 2 (Folh1), found in Rattus norvegicus (Rat).